Reading from the N-terminus, the 239-residue chain is MLEIGFCTLEDQCPYLKDKRSRIEYKYIENCPKEINNELIKRGWRRFGRYFSRPICKDCDECLSLRILVNEYNFSRSERRVVNKNINTKVILRTPNLSNEHLFLYDKYHRFMEEKKNWKRYDLSFKQYYNLYVDGFMNFGYELAFYIEDKLVCVDLIDILEDGISSIYCFYDPDFSYFSLGKFSLLNEIQIAKKMNLDYIYLGYFVKKCQSLSYKADYTPNEILKGTKELFENEVLWEK.

It belongs to the R-transferase family. Bpt subfamily.

It localises to the cytoplasm. The enzyme catalyses N-terminal L-glutamyl-[protein] + L-leucyl-tRNA(Leu) = N-terminal L-leucyl-L-glutamyl-[protein] + tRNA(Leu) + H(+). It catalyses the reaction N-terminal L-aspartyl-[protein] + L-leucyl-tRNA(Leu) = N-terminal L-leucyl-L-aspartyl-[protein] + tRNA(Leu) + H(+). In terms of biological role, functions in the N-end rule pathway of protein degradation where it conjugates Leu from its aminoacyl-tRNA to the N-termini of proteins containing an N-terminal aspartate or glutamate. The sequence is that of Aspartate/glutamate leucyltransferase from Campylobacter jejuni subsp. jejuni serotype O:2 (strain ATCC 700819 / NCTC 11168).